The chain runs to 232 residues: Rho-related GTP-binding protein Rho6 (232 aa).

Residues 23 to 28 (QCGKTA), 38 to 45 (YPETYVPT), 67 to 71 (DTSGS), 125 to 128 (CKTD), and 169 to 170 (AF) each bind GTP. The short motif at 42–50 (YVPTVFENY) is the Effector region element. Cysteine 229 carries the post-translational modification Cysteine methyl ester. Cysteine 229 carries the S-geranylgeranyl cysteine lipid modification. A propeptide spans 230 to 232 (SIM) (removed in mature form).

This sequence belongs to the small GTPase superfamily. Rho family. Binds GRB7 and PLXNB1. Interacts with PLXNA2. Interacts with UBXD5.

The protein localises to the cell membrane. It is found in the cytoplasm. It localises to the cytoskeleton. Lacks intrinsic GTPase activity. Has a low affinity for GDP, and constitutively binds GTP. Controls rearrangements of the actin cytoskeleton. Induces the Rac-dependent neuritic process formation in part by disruption of the cortical actin filaments. Causes the formation of many neuritic processes from the cell body with disruption of the cortical actin filaments. This Mus musculus (Mouse) protein is Rho-related GTP-binding protein Rho6 (Rnd1).